The chain runs to 498 residues: MKTIQFDMNKYETHVDLEYLKEHGRVEKISDGVIFCSGLENAALHQAVLIDERHRGVILELNEEFVGIGLIDKTSDILEGMNVSVTDHFIEVNLFDDMAGRIIDTTGKMLYEESEEQPTSSSPLFRVTPEIMTIDSVTRPLNTGLAVIDSITPIGRGQRQLILGNRQSGKTQIAVDTIINQHDQNVHCIYVAIGLKAAYIAEVIETLRNHDALKYSTVVATAASDSLTAQYLTPYAGMAVAEALREQGKDVLIIFDDLTKHADAYRAITLLFNRPPGREAYPGDSFYIHSSLLERAVQMNPEHGGGSITALPMIETLSDDVTAYIPTNVISITDGQLFLKSDLFNRGQKPAVDVGVSVSRIGGDAQHPIIRKLSKNLTLILSQFEELKELLDFGNGLDEGSMKMVTDGRILTELFKQKILSPLSVTDLIVILYAFQNGFLTKVPPAKIESFKGLLLEKAHARNDFIAFSNDIKDISELSDAHTKMLEEIIQEVGRLFS.

Position 164–171 (164–171 (GNRQSGKT)) interacts with ATP.

This sequence belongs to the ATPase alpha/beta chains family. F-type ATPases have 2 components, CF(1) - the catalytic core - and CF(0) - the membrane proton channel. CF(1) has five subunits: alpha(3), beta(3), gamma(1), delta(1), epsilon(1). CF(0) has three main subunits: a(1), b(2) and c(9-12). The alpha and beta chains form an alternating ring which encloses part of the gamma chain. CF(1) is attached to CF(0) by a central stalk formed by the gamma and epsilon chains, while a peripheral stalk is formed by the delta and b chains.

The protein resides in the cell membrane. It catalyses the reaction ATP + H2O + 4 H(+)(in) = ADP + phosphate + 5 H(+)(out). Functionally, produces ATP from ADP in the presence of a proton gradient across the membrane. The alpha chain is a regulatory subunit. The chain is ATP synthase subunit alpha 1 from Listeria welshimeri serovar 6b (strain ATCC 35897 / DSM 20650 / CCUG 15529 / CIP 8149 / NCTC 11857 / SLCC 5334 / V8).